The primary structure comprises 377 residues: MAEEVVVVAKFDYVAQQEQELDIKKNERLWLLDDSKSWWRVRNSMNKTGFVPSNYVERKNSARKASIVKNLKDTLGIGKVKRKPSVPDTASPADDSFVDPGERLYDLNMPAFVKFNYMAEREDELSLIKGTKVIVMEKCSDGWWRGSYNGQIGWFPSNYVTEEGDSPLGDHVGSLSEKLAAVVNNLNTGQVLHVVQALYPFSSSNDEELNFEKGDVMDVIEKPENDPEWWKCRKINGMVGLVPKNYVTIMQNNPLTSGLEPSPPQCDYIRPSLTGKFAGNPWYYGKVTRHQAEMALNERGHEGDFLIRDSESSPNDFSVSLKAQGKNKHFKVQLKETVYCIGQRKFSTMEELVEHYKKAPIFTSEQGEKLYLVKHLS.

A2 is modified (N-acetylalanine). An SH3 1 domain is found at 2–61 (AEEVVVVAKFDYVAQQEQELDIKKNERLWLLDDSKSWWRVRNSMNKTGFVPSNYVERKNS). Residues S85, S91, and S96 each carry the phosphoserine modification. A Phosphotyrosine modification is found at Y105. The SH3 2 domain occupies 106–165 (DLNMPAFVKFNYMAEREDELSLIKGTKVIVMEKCSDGWWRGSYNGQIGWFPSNYVTEEGD). At S166 the chain carries Phosphoserine. In terms of domain architecture, SH3 3 spans 190 to 252 (QVLHVVQALY…PKNYVTIMQN (63 aa)). One can recognise an SH2 domain in the interval 282–376 (WYYGKVTRHQ…GEKLYLVKHL (95 aa)).

Interacts (via SH2 domain and SH3 domain 2) with EGFR. Interacts with PAK1 and SOS1. Interacts (via SH3 domains) with PKN2. Associates with BLNK, PLCG1, VAV1 and NCK1 in a B-cell antigen receptor-dependent fashion. Interacts with SOCS7. This interaction is required for nuclear import. Part of a complex containing PPP1R15B, PP1 and NCK1. Interacts with RALGPS1. Interacts with CAV2 (tyrosine phosphorylated form). Interacts with ADAM15. Interacts with FASLG. Directly interacts with RASA1. Interacts with isoform 4 of MINK1. Interacts with FLT1 (tyrosine phosphorylated). Interacts with KDR (tyrosine phosphorylated). Interacts (via SH2 domain) with EPHB1; activates the JUN cascade to regulate cell adhesion. Interacts with EPHA2. Interacts (via SH2 domain) with PDGFRB (tyrosine phosphorylated). Interacts with the inactive form of EIF2AK2/PKR. Interacts with PTPN1. Interacts with INSR/insulin receptor (in response to insulin stimulation); this interaction may mediate PTPN1 recruitment leading to INSR dephosphorylation. Interacts with CD3E (via Proline-rich sequence); the interaction is ligand dependent but independent of tyrosine kinase activation. Interacts with EGFR. Interacts with IRS1. Phosphorylated on Ser and Tyr residues. Phosphorylated in response to activation of EGFR and FcERI. Phosphorylated by activated PDGFRB.

Its subcellular location is the cytoplasm. It is found in the endoplasmic reticulum. It localises to the nucleus. Functionally, adapter protein which associates with tyrosine-phosphorylated growth factor receptors, such as KDR and PDGFRB, or their cellular substrates. Maintains low levels of EIF2S1 phosphorylation by promoting its dephosphorylation by PP1. Plays a role in the DNA damage response, not in the detection of the damage by ATM/ATR, but for efficient activation of downstream effectors, such as that of CHEK2. Plays a role in ELK1-dependent transcriptional activation in response to activated Ras signaling. Modulates the activation of EIF2AK2/PKR by dsRNA. May play a role in cell adhesion and migration through interaction with ephrin receptors. Also acts as an adpater protein for the T cell receptor complex (TCR-CD3E). Upon ligand engagement, is recruited by CD3E and promotes maturation of the immune synapse and T cell activation. The chain is SH2/SH3 adapter protein Nck1 (Nck1) from Mus musculus (Mouse).